Consider the following 212-residue polypeptide: Redox-sensing transcriptional repressor Rex (212 aa).

A DNA-binding region (H-T-H motif) is located at residues 17 to 56 (LYYRIFKRFNTDGIEKASSKQIADALGIDSATVRRDFSYF). Position 91–96 (91–96 (GCGNIG)) interacts with NAD(+).

The protein belongs to the transcriptional regulatory Rex family. In terms of assembly, homodimer.

The protein resides in the cytoplasm. Functionally, modulates transcription in response to changes in cellular NADH/NAD(+) redox state. The chain is Redox-sensing transcriptional repressor Rex from Streptococcus agalactiae serotype III (strain NEM316).